The chain runs to 262 residues: Type III pantothenate kinase (262 aa).

Residue 9-16 (DIGNTNVK) participates in ATP binding. Substrate contacts are provided by residues tyrosine 103 and 110–113 (GADR). Aspartate 112 (proton acceptor) is an active-site residue. Aspartate 134 lines the K(+) pocket. Threonine 137 is a binding site for ATP. Threonine 190 provides a ligand contact to substrate.

It belongs to the type III pantothenate kinase family. In terms of assembly, homodimer. Requires NH4(+) as cofactor. K(+) is required as a cofactor.

It is found in the cytoplasm. It carries out the reaction (R)-pantothenate + ATP = (R)-4'-phosphopantothenate + ADP + H(+). It functions in the pathway cofactor biosynthesis; coenzyme A biosynthesis; CoA from (R)-pantothenate: step 1/5. Catalyzes the phosphorylation of pantothenate (Pan), the first step in CoA biosynthesis. In Nitratidesulfovibrio vulgaris (strain ATCC 29579 / DSM 644 / CCUG 34227 / NCIMB 8303 / VKM B-1760 / Hildenborough) (Desulfovibrio vulgaris), this protein is Type III pantothenate kinase.